Here is a 164-residue protein sequence, read N- to C-terminus: S-ribosylhomocysteine lyase (164 aa).

3 residues coordinate Fe cation: His61, His65, and Cys131.

It belongs to the LuxS family. As to quaternary structure, homodimer. It depends on Fe cation as a cofactor.

The catalysed reaction is S-(5-deoxy-D-ribos-5-yl)-L-homocysteine = (S)-4,5-dihydroxypentane-2,3-dione + L-homocysteine. Functionally, involved in the synthesis of autoinducer 2 (AI-2) which is secreted by bacteria and is used to communicate both the cell density and the metabolic potential of the environment. The regulation of gene expression in response to changes in cell density is called quorum sensing. Catalyzes the transformation of S-ribosylhomocysteine (RHC) to homocysteine (HC) and 4,5-dihydroxy-2,3-pentadione (DPD). This chain is S-ribosylhomocysteine lyase, found in Bifidobacterium longum subsp. infantis (strain ATCC 15697 / DSM 20088 / JCM 1222 / NCTC 11817 / S12).